Consider the following 276-residue polypeptide: MSWHAHLHLDYRQEAARSVARFRHDGPLRILQSLYPEGDAICHNVLVHPPGGLVGGDTLDIDIEAADASHGLITTPGASRFYRSEGELALQRTRIRLAKGARLEWLPLEAICYSGCRAENRLTIEAEPGAEMIGWDVTALGLPNANQPFERGTYLQHIEVPGVWLERGRIDAADHRLLQSPLGFGGHRCIASLFFVSGTPAARARREALLALARTAIDAHGLQESAGATSPHAEIVVLRVLAPVVEPAMQLLRQVWQAWRAELWQLPASSPRIWAT.

Belongs to the UreD family. UreD, UreF and UreG form a complex that acts as a GTP-hydrolysis-dependent molecular chaperone, activating the urease apoprotein by helping to assemble the nickel containing metallocenter of UreC. The UreE protein probably delivers the nickel.

The protein localises to the cytoplasm. Its function is as follows. Required for maturation of urease via the functional incorporation of the urease nickel metallocenter. This is Urease accessory protein UreD from Variovorax paradoxus (strain S110).